Here is a 439-residue protein sequence, read N- to C-terminus: Glucan 1,3-beta-glucosidase (439 aa).

Residues 1–18 form the signal peptide; sequence MLLSLLFLLSTFAFGALT. Glu-227 functions as the Proton donor in the catalytic mechanism. Cystine bridges form between Cys-311-Cys-437 and Cys-336-Cys-366. The active-site Nucleophile is Glu-328.

Belongs to the glycosyl hydrolase 5 (cellulase A) family.

The protein resides in the secreted. The enzyme catalyses Successive hydrolysis of beta-D-glucose units from the non-reducing ends of (1-&gt;3)-beta-D-glucans, releasing alpha-glucose.. In terms of biological role, beta-glucanases participate in the metabolism of beta-glucan, the main structural component of the cell wall. It could also function biosynthetically as a transglycosylase. The protein is Glucan 1,3-beta-glucosidase (EXG1) of Lachancea kluyveri (strain ATCC 58438 / CBS 3082 / BCRC 21498 / NBRC 1685 / JCM 7257 / NCYC 543 / NRRL Y-12651) (Yeast).